A 252-amino-acid chain; its full sequence is 5'-methylthioadenosine/S-adenosylhomocysteine nucleosidase (252 aa).

Catalysis depends on E20, which acts as the Proton acceptor. Residues G86, I160, and 181 to 182 (ME) contribute to the substrate site. Catalysis depends on D205, which acts as the Proton donor.

The protein belongs to the PNP/UDP phosphorylase family. MtnN subfamily. As to quaternary structure, homodimer.

It catalyses the reaction S-adenosyl-L-homocysteine + H2O = S-(5-deoxy-D-ribos-5-yl)-L-homocysteine + adenine. The catalysed reaction is S-methyl-5'-thioadenosine + H2O = 5-(methylsulfanyl)-D-ribose + adenine. The enzyme catalyses 5'-deoxyadenosine + H2O = 5-deoxy-D-ribose + adenine. Its pathway is amino-acid biosynthesis; L-methionine biosynthesis via salvage pathway; S-methyl-5-thio-alpha-D-ribose 1-phosphate from S-methyl-5'-thioadenosine (hydrolase route): step 1/2. Catalyzes the irreversible cleavage of the glycosidic bond in both 5'-methylthioadenosine (MTA) and S-adenosylhomocysteine (SAH/AdoHcy) to adenine and the corresponding thioribose, 5'-methylthioribose and S-ribosylhomocysteine, respectively. Also cleaves 5'-deoxyadenosine, a toxic by-product of radical S-adenosylmethionine (SAM) enzymes, into 5-deoxyribose and adenine. Thus, is required for in vivo function of the radical SAM enzymes biotin synthase and lipoic acid synthase, that are inhibited by 5'-deoxyadenosine accumulation. The sequence is that of 5'-methylthioadenosine/S-adenosylhomocysteine nucleosidase from Buchnera aphidicola subsp. Baizongia pistaciae (strain Bp).